The primary structure comprises 85 residues: F(1)-ATPase inhibitor IF(1), mitochondrial (85 aa).

The N-terminal 22 residues, 1-22 (MLPRSALARSLQLQRGVAARFY), are a transit peptide targeting the mitochondrion. The stretch at 41–84 (KRERATEDFFVRQREKEQLRHLKEQLEKQRKKIDSLENKIDSMT) forms a coiled coil.

This sequence belongs to the ATPase inhibitor family. As to quaternary structure, monomer and homodimer. The protein aggregates less strongly with increasing pH.

The protein resides in the mitochondrion. Endogenous ATPase inhibitor, which inhibits specifically the reverse ATPase reaction of mitochondrial F(1)F(0)-type ATP synthase. It limits ATP depletion when the mitochondrial membrane potential falls below a threshold and the F(1)F(0)-ATP synthase starts hydrolyzing ATP to pump protons out of the mitochondrial matrix. Required to avoid the consumption of cellular ATP when the F(1)F(0)-ATP synthase enzyme acts as an ATP hydrolase. Functions through inserting its N-terminal part into the catalytically active F1-ATPase, thereby blocking its rotational movement and subsequently the ATP hydrolase activity. In Saccharomyces cerevisiae (strain ATCC 204508 / S288c) (Baker's yeast), this protein is F(1)-ATPase inhibitor IF(1), mitochondrial (INH1).